The primary structure comprises 448 residues: Asparagine--tRNA ligase (448 aa).

Belongs to the class-II aminoacyl-tRNA synthetase family. In terms of assembly, homodimer.

The protein resides in the cytoplasm. It catalyses the reaction tRNA(Asn) + L-asparagine + ATP = L-asparaginyl-tRNA(Asn) + AMP + diphosphate + H(+). The chain is Asparagine--tRNA ligase from Streptococcus pyogenes serotype M4 (strain MGAS10750).